The chain runs to 439 residues: Exosome complex component RRP45 (439 aa).

The tract at residues 1–268 is ARE binding; that stretch reads MKETPLSNCE…AEITELILKA (268 aa). At serine 65 the chain carries Phosphoserine. Lysine 297 is modified (N6-acetyllysine; alternate). Lysine 297 participates in a covalent cross-link: Glycyl lysine isopeptide (Lys-Gly) (interchain with G-Cter in SUMO1); alternate. A Glycyl lysine isopeptide (Lys-Gly) (interchain with G-Cter in SUMO2); alternate cross-link involves residue lysine 297. Phosphoserine occurs at positions 306, 325, 327, and 346. Disordered stretches follow at residues 335–363 and 391–439; these read GTAQIGEGVENSWGDLEDSEKEDDEGGGD and LSDS…RAAN. Residues 349 to 361 show a composition bias toward acidic residues; that stretch reads DLEDSEKEDDEGG. Serine 392, serine 394, lysine 409, and isoleucine 411 each carry phosphoserine. Residue lysine 419 forms a Glycyl lysine isopeptide (Lys-Gly) (interchain with G-Cter in SUMO2) linkage. Positions 425 to 439 are enriched in basic residues; the sequence is SKKPVKRRKKKRAAN.

This sequence belongs to the RNase PH family. In terms of assembly, component of the RNA exosome core complex (Exo-9), composed of EXOSC1, EXOSC2, EXOSC3, EXOSC4, EXOSC5, EXOSC6, EXOSC7, EXOSC8 and EXOSC9; within the complex interacts with EXOSC3, EXOSC4, EXOSC5 and DIS3. The catalytically inactive RNA exosome core complex (Exo-9) associates with the catalytic subunit EXOSC10/RRP6. Exo-9 may associate with DIS3 to form the nucleolar exosome complex, or DIS3L to form the cytoplasmic exosome complex. Exo-9 is formed by a hexameric base ring consisting of the heterodimers EXOSC4-EXOSC9, EXOSC5-EXOSC8 and EXOSC6-EXOSC7, and a cap ring consisting of EXOSC1, EXOSC2 and EXOSC3. The RNA exosome complex associates with cofactors C1D/RRP47, MPHOSPH6/MPP6 and MTREX/MTR4. Interacts (via C-terminus region) with SETX (via N-terminus domain); the interaction enhances SETX sumoylation. Interacts with DIS3; the interaction is direct.

The protein resides in the cytoplasm. It localises to the nucleus. Its subcellular location is the nucleolus. It is found in the nucleoplasm. In terms of biological role, non-catalytic component of the RNA exosome complex which has 3'-&gt;5' exoribonuclease activity and participates in a multitude of cellular RNA processing and degradation events. In the nucleus, the RNA exosome complex is involved in proper maturation of stable RNA species such as rRNA, snRNA and snoRNA, in the elimination of RNA processing by-products and non-coding 'pervasive' transcripts, such as antisense RNA species and promoter-upstream transcripts (PROMPTs), and of mRNAs with processing defects, thereby limiting or excluding their export to the cytoplasm. The RNA exosome may be involved in Ig class switch recombination (CSR) and/or Ig variable region somatic hypermutation (SHM) by targeting AICDA deamination activity to transcribed dsDNA substrates. In the cytoplasm, the RNA exosome complex is involved in general mRNA turnover and specifically degrades inherently unstable mRNAs containing AU-rich elements (AREs) within their 3' untranslated regions, and in RNA surveillance pathways, preventing translation of aberrant mRNAs. It seems to be involved in degradation of histone mRNA. The catalytic inactive RNA exosome core complex of 9 subunits (Exo-9) is proposed to play a pivotal role in the binding and presentation of RNA for ribonucleolysis, and to serve as a scaffold for the association with catalytic subunits and accessory proteins or complexes. EXOSC9 binds to ARE-containing RNAs. The protein is Exosome complex component RRP45 (EXOSC9) of Homo sapiens (Human).